Here is a 121-residue protein sequence, read N- to C-terminus: Large ribosomal subunit protein uL18 (121 aa).

This sequence belongs to the universal ribosomal protein uL18 family. In terms of assembly, part of the 50S ribosomal subunit; part of the 5S rRNA/L5/L18/L25 subcomplex. Contacts the 5S and 23S rRNAs.

In terms of biological role, this is one of the proteins that bind and probably mediate the attachment of the 5S RNA into the large ribosomal subunit, where it forms part of the central protuberance. The sequence is that of Large ribosomal subunit protein uL18 from Paraburkholderia phymatum (strain DSM 17167 / CIP 108236 / LMG 21445 / STM815) (Burkholderia phymatum).